The primary structure comprises 286 residues: MDQTIDWWPSPAKLNLFLHINGRYPNGYHQLQSLFQLLDKGDELAFTVTPHAEITLLTPIDGVANEDNLIVKAARLLQTHTGCSEGCDIQLRKVLPMGGGIGGGSSNAATTLIALNYLWKCNLSLTELAELGLALGADVPVFVMGNTAFAQGVGEQLTPVNIAQKHYLVVFPECHVSTAEVFNAPDLPRNTPLISWQEYDFDQTHNDCQQLVCNRFENVANTLRWLLEYAPSRMTGTGACLFAVFTSNQEAENVLANLPSGCSGFVSKGVDVSPVHDKLAHLGSIS.

Lysine 13 is an active-site residue. 96–106 is an ATP binding site; it reads PMGGGIGGGSS. The active site involves aspartate 138.

This sequence belongs to the GHMP kinase family. IspE subfamily.

The catalysed reaction is 4-CDP-2-C-methyl-D-erythritol + ATP = 4-CDP-2-C-methyl-D-erythritol 2-phosphate + ADP + H(+). It participates in isoprenoid biosynthesis; isopentenyl diphosphate biosynthesis via DXP pathway; isopentenyl diphosphate from 1-deoxy-D-xylulose 5-phosphate: step 3/6. In terms of biological role, catalyzes the phosphorylation of the position 2 hydroxy group of 4-diphosphocytidyl-2C-methyl-D-erythritol. The chain is 4-diphosphocytidyl-2-C-methyl-D-erythritol kinase from Pseudoalteromonas atlantica (strain T6c / ATCC BAA-1087).